Here is a 410-residue protein sequence, read N- to C-terminus: 23S rRNA (uracil(747)-C(5))-methyltransferase (410 aa).

[4Fe-4S] cluster-binding residues include Cys61, Cys67, Cys70, and Cys137. 4 residues coordinate S-adenosyl-L-methionine: Gln253, Tyr279, Glu300, and Asp341. The Nucleophile role is filled by Cys367.

The protein belongs to the class I-like SAM-binding methyltransferase superfamily. RNA M5U methyltransferase family.

It carries out the reaction uridine(747) in 23S rRNA + S-adenosyl-L-methionine = 5-methyluridine(747) in 23S rRNA + S-adenosyl-L-homocysteine + H(+). With respect to regulation, activated by magnesium ions. Its function is as follows. Catalyzes the formation of 5-methyl-uridine at position equivalent to 747 (m5U747) in 23S rRNA (m5U859 in the P.abyssi numbering). This Pyrococcus abyssi (strain GE5 / Orsay) protein is 23S rRNA (uracil(747)-C(5))-methyltransferase.